Here is a 308-residue protein sequence, read N- to C-terminus: 4-hydroxyproline 2-epimerase (308 aa).

The Proton acceptor role is filled by Cys88. Substrate-binding positions include 89–90 (GH), His208, and Asp232. The active-site Proton donor is Cys236. Residue 237 to 238 (GT) participates in substrate binding.

This sequence belongs to the proline racemase family.

It carries out the reaction trans-4-hydroxy-L-proline = cis-4-hydroxy-D-proline. Catalyzes the epimerization of trans-4-hydroxy-L-proline (t4LHyp) to cis-4-hydroxy-D-proline (c4DHyp). Is likely involved in a degradation pathway that converts t4LHyp to alpha-ketoglutarate. Can also catalyze the epimerization of trans-3-hydroxy-L-proline (t3LHyp) to cis-3-hydroxy-D-proline (c3DHyp), albeit with 200-fold lower efficiency. This Pseudomonas putida (strain ATCC 700007 / DSM 6899 / JCM 31910 / BCRC 17059 / LMG 24140 / F1) protein is 4-hydroxyproline 2-epimerase.